A 116-amino-acid polypeptide reads, in one-letter code: RutC family protein HI_1627 (116 aa).

It belongs to the RutC family.

This Haemophilus influenzae (strain ATCC 51907 / DSM 11121 / KW20 / Rd) protein is RutC family protein HI_1627.